Reading from the N-terminus, the 214-residue chain is CASP-like protein 3A1 (214 aa).

The Cytoplasmic segment spans residues 1–49; that stretch reads MTNGQKIEVAVQLPESKVAATENNETMSGPLVVGGGVAKPFGRKADVMH. Residues 50–70 form a helical membrane-spanning segment; sequence VILRLLCTITSVTAVSFMVTA. Residues 71 to 96 are Extracellular-facing; the sequence is HQSSTVSIYGFMLPVRSKWSFSHSFE. A helical transmembrane segment spans residues 97–117; it reads YLVGVSAAVAAHSLLQLLISM. Residues 118–132 are Cytoplasmic-facing; that stretch reads SRLLRKSPVIPSRSH. The chain crosses the membrane as a helical span at residues 133–153; it reads AWLIFAGDQVFAYAMISAGAA. At 154–182 the chain is on the extracellular side; sequence ASGVTNLNRTGIQHTALPNFCKPLNYFCN. An N-linked (GlcNAc...) asparagine glycan is attached at N161. Residues 183-203 traverse the membrane as a helical segment; sequence HVAVSIAFAFISCLLLAALAV. Residues 204-214 are Cytoplasmic-facing; it reads QEVIWLSKSKY.

This sequence belongs to the Casparian strip membrane proteins (CASP) family. As to quaternary structure, homodimer and heterodimers.

It is found in the cell membrane. The sequence is that of CASP-like protein 3A1 from Ricinus communis (Castor bean).